A 32-amino-acid polypeptide reads, in one-letter code: Photosystem I reaction center subunit XII (32 aa).

A helical membrane pass occupies residues 3–23 (SISDGQIVVALISAFIIVILA).

This sequence belongs to the PsaM family.

The protein resides in the plastid. Its subcellular location is the chloroplast thylakoid membrane. The chain is Photosystem I reaction center subunit XII from Anthoceros angustus (Hornwort).